A 292-amino-acid polypeptide reads, in one-letter code: 2-(5''-triphosphoribosyl)-3'-dephosphocoenzyme-A synthase (292 aa).

The protein belongs to the CitG/MdcB family.

It catalyses the reaction 3'-dephospho-CoA + ATP = 2'-(5''-triphospho-alpha-D-ribosyl)-3'-dephospho-CoA + adenine. Its function is as follows. Catalyzes the formation of 2-(5''-triphosphoribosyl)-3'-dephosphocoenzyme-A, the precursor of the prosthetic group of the holo-acyl carrier protein (gamma chain) of citrate lyase, from ATP and dephospho-CoA. This is 2-(5''-triphosphoribosyl)-3'-dephosphocoenzyme-A synthase from Escherichia coli O127:H6 (strain E2348/69 / EPEC).